Reading from the N-terminus, the 382-residue chain is Ferredoxin--NADP reductase, root isozyme 2, chloroplastic (382 aa).

Residues 1 to 64 (MSHSAVSQAG…DGKRYPSTTI (64 aa)) constitute a chloroplast transit peptide. In terms of domain architecture, FAD-binding FR-type spans 97–225 (KESYTAKIVS…TGPSGKVMLL (129 aa)). The cysteines at positions 200 and 205 are disulfide-linked. Position 201 is a phosphoserine (Ser201). Thr233 is modified (phosphothreonine). Residue 235–253 (IMIATGTGVAPYRGYLRRM) participates in NADP(+) binding.

Belongs to the ferredoxin--NADP reductase type 1 family. It depends on FAD as a cofactor. Expressed in shoots and roots. More abundant in roots than RFNR1.

The protein localises to the plastid. Its subcellular location is the chloroplast. The enzyme catalyses 2 reduced [2Fe-2S]-[ferredoxin] + NADP(+) + H(+) = 2 oxidized [2Fe-2S]-[ferredoxin] + NADPH. Maintains the supply of reduced ferredoxin under non-photosynthetic conditions. The sequence is that of Ferredoxin--NADP reductase, root isozyme 2, chloroplastic (RFNR2) from Arabidopsis thaliana (Mouse-ear cress).